A 501-amino-acid polypeptide reads, in one-letter code: Aromatase 3 (501 aa).

A heme-binding site is contributed by cysteine 435.

This sequence belongs to the cytochrome P450 family. It depends on heme as a cofactor. Ovary.

The protein localises to the membrane. It carries out the reaction testosterone + 3 reduced [NADPH--hemoprotein reductase] + 3 O2 = 17beta-estradiol + formate + 3 oxidized [NADPH--hemoprotein reductase] + 4 H2O + 4 H(+). It catalyses the reaction androst-4-ene-3,17-dione + 3 reduced [NADPH--hemoprotein reductase] + 3 O2 = estrone + formate + 3 oxidized [NADPH--hemoprotein reductase] + 4 H2O + 4 H(+). Catalyzes the formation of aromatic C18 estrogens from C19 androgens. This chain is Aromatase 3 (CYP19A3), found in Sus scrofa (Pig).